The primary structure comprises 149 residues: Glutamate mutase sigma subunit (149 aa).

A B12-binding domain is found at 5 to 138 (DPTVVLGTIG…DAVKTELDVD (134 aa)). Adenosylcob(III)alamin contacts are provided by residues 15–19 (SDAHA), histidine 18, 63–65 (SSL), and 94–98 (NLAVG).

Belongs to the methylaspartate mutase GlmS subunit family. In terms of assembly, heterotetramer composed of 2 epsilon subunits (GlmE) and 2 sigma subunits (GlmS). GlmE exists as a homodimer and GlmS as a monomer. Adenosylcob(III)alamin is required as a cofactor.

The enzyme catalyses (2S,3S)-3-methyl-L-aspartate = L-glutamate. It functions in the pathway amino-acid degradation; L-glutamate degradation via mesaconate pathway; acetate and pyruvate from L-glutamate: step 1/4. Functionally, catalyzes the carbon skeleton rearrangement of L-glutamate to L-threo-3-methylaspartate ((2S,3S)-3-methylaspartate). The chain is Glutamate mutase sigma subunit from Halobacterium salinarum (strain ATCC 700922 / JCM 11081 / NRC-1) (Halobacterium halobium).